The chain runs to 599 residues: Beta-(1--&gt;2)glucan export ATP-binding/permease protein NdvA (599 aa).

Positions 21–311 (GWILAVANLL…VVNFINNVLM (291 aa)) constitute an ABC transmembrane type-1 domain. The next 6 helical transmembrane spans lie at 22–42 (WILA…PILF), 68–88 (LLGA…LVAL), 146–166 (EHFA…YINW), 168–188 (LAIL…LVVH), 254–274 (VITR…GIYL), and 276–296 (QQGL…TLLI). In terms of domain architecture, ABC transporter spans 345–579 (VEFQNVSFSY…GGAFAQLARA (235 aa)). 378-385 (GATGAGKS) serves as a coordination point for ATP.

It belongs to the ABC transporter superfamily. Beta-(1--&gt;2)glucan exporter (TC 3.A.1.108.1) family. In terms of assembly, homodimer.

The protein resides in the cell inner membrane. It catalyses the reaction [(1-&gt;2)-beta-D-glucosyl](n)(in) + ATP + H2O = [(1-&gt;2)-beta-D-glucosyl](n)(out) + ADP + phosphate + H(+). Functionally, involved in beta-(1--&gt;2)glucan export. Transmembrane domains (TMD) form a pore in the inner membrane and the ATP-binding domain (NBD) is responsible for energy generation. In Rhodopseudomonas palustris (strain ATCC BAA-98 / CGA009), this protein is Beta-(1--&gt;2)glucan export ATP-binding/permease protein NdvA.